The primary structure comprises 490 residues: Chromosomal replication initiator protein DnaA (490 aa).

Residues 1–75 are domain I, interacts with DnaA modulators; it reads MAVSSDAEQK…SELWKQEDAD (75 aa). The tract at residues 75–145 is domain II; it reads DLLKIEIVVR…SEFRHNVLGS (71 aa). Residues 146-368 are domain III, AAA+ region; sequence PLDPRYTFGS…GAFNQLLFRQ (223 aa). 4 residues coordinate ATP: Gly192, Gly194, Lys195, and Thr196. The domain IV, binds dsDNA stretch occupies residues 369–490; it reads SFEPQITIDR…LLRRLINDQA (122 aa).

This sequence belongs to the DnaA family. In terms of assembly, oligomerizes as a right-handed, spiral filament on DNA at oriC.

The protein localises to the cytoplasm. In terms of biological role, plays an essential role in the initiation and regulation of chromosomal replication. ATP-DnaA binds to the origin of replication (oriC) to initiate formation of the DNA replication initiation complex once per cell cycle. Binds the DnaA box (a 9 base pair repeat at the origin) and separates the double-stranded (ds)DNA. Forms a right-handed helical filament on oriC DNA; dsDNA binds to the exterior of the filament while single-stranded (ss)DNA is stabiized in the filament's interior. The ATP-DnaA-oriC complex binds and stabilizes one strand of the AT-rich DNA unwinding element (DUE), permitting loading of DNA polymerase. After initiation quickly degrades to an ADP-DnaA complex that is not apt for DNA replication. Binds acidic phospholipids. The chain is Chromosomal replication initiator protein DnaA from Mesorhizobium japonicum (strain LMG 29417 / CECT 9101 / MAFF 303099) (Mesorhizobium loti (strain MAFF 303099)).